A 287-amino-acid polypeptide reads, in one-letter code: 4-hydroxybenzoate octaprenyltransferase (287 aa).

The next 9 membrane-spanning stretches (helical) occupy residues 22 to 42, 45 to 65, 95 to 115, 116 to 136, 140 to 160, 162 to 182, 214 to 234, 237 to 257, and 264 to 284; these read IGTYLLLWPTYWALWIASDGW, LQLLLVFSLGVFIMRSAGCVI, AINLFGVLIGMAFGLVLMLSW, STIYLSVVAVLLAAIYPFMKR, LPQLFLGAAFSWGMIMAFSEA, GEIPLVAWLLFTANLCWTIAY, IGFLQLMTLALLWTVGDILAF, PYQLCIIAAAGLFSYQQLLIV, and CFQAFLHNHWVGLVVFVGIAI.

This sequence belongs to the UbiA prenyltransferase family. Requires Mg(2+) as cofactor.

It localises to the cell inner membrane. The enzyme catalyses all-trans-octaprenyl diphosphate + 4-hydroxybenzoate = 4-hydroxy-3-(all-trans-octaprenyl)benzoate + diphosphate. It participates in cofactor biosynthesis; ubiquinone biosynthesis. Catalyzes the prenylation of para-hydroxybenzoate (PHB) with an all-trans polyprenyl group. Mediates the second step in the final reaction sequence of ubiquinone-8 (UQ-8) biosynthesis, which is the condensation of the polyisoprenoid side chain with PHB, generating the first membrane-bound Q intermediate 3-octaprenyl-4-hydroxybenzoate. In Colwellia psychrerythraea (strain 34H / ATCC BAA-681) (Vibrio psychroerythus), this protein is 4-hydroxybenzoate octaprenyltransferase.